The following is a 235-amino-acid chain: Class B acid phosphatase (235 aa).

The N-terminal stretch at 1–22 (MKNLVKLSLIAMLTAATLPAMA) is a signal peptide. Aspartate 67 functions as the Nucleophile in the catalytic mechanism. 2 residues coordinate Mg(2+): aspartate 67 and aspartate 69. The Proton donor role is filled by aspartate 69. Substrate contacts are provided by residues 135 to 136 (TG) and lysine 175. A Mg(2+)-binding site is contributed by aspartate 190.

The protein belongs to the class B bacterial acid phosphatase family. As to quaternary structure, homotetramer. Requires Mg(2+) as cofactor.

The protein resides in the periplasm. It carries out the reaction a phosphate monoester + H2O = an alcohol + phosphate. In terms of biological role, dephosphorylates several organic phosphate monoesters. Also has a phosphotransferase activity catalyzing the transfer of low-energy phosphate groups from organic phosphate monoesters to free hydroxyl groups of various organic compounds. This is Class B acid phosphatase from Aggregatibacter actinomycetemcomitans serotype C (strain D11S-1) (Actinobacillus actinomycetemcomitans).